The primary structure comprises 321 residues: Phospho-N-acetylmuramoyl-pentapeptide-transferase (321 aa).

10 helical membrane-spanning segments follow: residues 1-21, 50-70, 76-96, 112-132, 140-160, 176-196, 200-220, 225-245, 250-270, and 300-320; these read MLFILAVIALLITFILVPILI, MGGLTFLISIIITSIIAIFFV, IILLLFVTIGFGLIGFIDDYI, FLAQIAIAVVFFLLSDVFHLV, IPFTNISIPLSFAYVIFIVFW, GLATGLSIIGFTMYAIMSFVL, AIGAFCIIMIFALLGFLPYNL, VFMGDTGSLALGGIFATISIM, LSLLLIGLVFVIETASVMLQV, and VVTVFWTAGLISGLIGLWIGV.

The protein belongs to the glycosyltransferase 4 family. MraY subfamily. The cofactor is Mg(2+).

The protein localises to the cell membrane. The enzyme catalyses UDP-N-acetyl-alpha-D-muramoyl-L-alanyl-gamma-D-glutamyl-L-lysyl-D-alanyl-D-alanine + di-trans,octa-cis-undecaprenyl phosphate = Mur2Ac(oyl-L-Ala-gamma-D-Glu-L-Lys-D-Ala-D-Ala)-di-trans,octa-cis-undecaprenyl diphosphate + UMP. It functions in the pathway cell wall biogenesis; peptidoglycan biosynthesis. Catalyzes the initial step of the lipid cycle reactions in the biosynthesis of the cell wall peptidoglycan: transfers peptidoglycan precursor phospho-MurNAc-pentapeptide from UDP-MurNAc-pentapeptide onto the lipid carrier undecaprenyl phosphate, yielding undecaprenyl-pyrophosphoryl-MurNAc-pentapeptide, known as lipid I. This is Phospho-N-acetylmuramoyl-pentapeptide-transferase from Staphylococcus haemolyticus (strain JCSC1435).